Reading from the N-terminus, the 209-residue chain is HTH-type transcriptional repressor BepR (209 aa).

An HTH tetR-type domain is found at 9-69 (AETREAILLA…SIIGRARFPQ (61 aa)). The segment at residues 32-51 (TLTEIACYAGVTRGAIYFHF) is a DNA-binding region (H-T-H motif).

Functionally, represses expression of bepDE. The polypeptide is HTH-type transcriptional repressor BepR (bepR) (Brucella suis biovar 1 (strain 1330)).